The sequence spans 260 residues: Proteasome subunit alpha 1 (260 aa).

Positions 237–260 (AEADLLDTGEDADDEAEDEDATEE) are disordered. Residues 240-260 (DLLDTGEDADDEAEDEDATEE) show a composition bias toward acidic residues.

Belongs to the peptidase T1A family. In terms of assembly, the 20S proteasome core is composed of 14 alpha and 14 beta subunits that assemble into four stacked heptameric rings, resulting in a barrel-shaped structure. The two inner rings, each composed of seven catalytic beta subunits, are sandwiched by two outer rings, each composed of seven alpha subunits. The catalytic chamber with the active sites is on the inside of the barrel. Has a gated structure, the ends of the cylinder being occluded by the N-termini of the alpha-subunits. Is capped at one or both ends by the proteasome regulatory ATPase, PAN.

It is found in the cytoplasm. With respect to regulation, the formation of the proteasomal ATPase PAN-20S proteasome complex, via the docking of the C-termini of PAN into the intersubunit pockets in the alpha-rings, triggers opening of the gate for substrate entry. Interconversion between the open-gate and close-gate conformations leads to a dynamic regulation of the 20S proteasome proteolysis activity. Functionally, component of the proteasome core, a large protease complex with broad specificity involved in protein degradation. This chain is Proteasome subunit alpha 1, found in Haloarcula marismortui (strain ATCC 43049 / DSM 3752 / JCM 8966 / VKM B-1809) (Halobacterium marismortui).